The chain runs to 77 residues: Conotoxin Cl6.12 (77 aa).

The signal sequence occupies residues 1 to 20; the sequence is MKFYLLLTAALLLTAVIIEA. The propeptide occupies 21 to 36; the sequence is APTDHQDEARDLMREE. Disulfide bonds link C43-C58, C51-C62, and C57-C68.

As to expression, expressed by the venom duct.

The protein localises to the secreted. The sequence is that of Conotoxin Cl6.12 from Californiconus californicus (California cone).